The primary structure comprises 190 residues: Voltage-dependent calcium channel gamma-like subunit (190 aa).

Helical transmembrane passes span 25–45, 96–116, 131–151, and 155–175; these read FIRT…SVSI, ALAV…QLCE, LLVS…LLRN, and LIGF…LFLN.

It belongs to the PMP-22/EMP/MP20 family. CACNG subfamily. In terms of assembly, the L-type calcium channel is composed of five subunits: alpha-1, alpha-2/delta, beta and gamma.

Its subcellular location is the membrane. Functionally, thought to stabilize the calcium channel in an inactivated (closed) state. Modulates calcium current when coexpressed with CACNA1G. This chain is Voltage-dependent calcium channel gamma-like subunit, found in Homo sapiens (Human).